A 299-amino-acid chain; its full sequence is Protease HtpX homolog (299 aa).

Transmembrane regions (helical) follow at residues 15–35 and 37–57; these read MFLTMFLLAALYLFFLAVLWQ and GVSYTGIIVFVAIMLGVQYYF. Residue histidine 140 participates in Zn(2+) binding. Glutamate 141 is a catalytic residue. Histidine 144 contacts Zn(2+). A run of 2 helical transmembrane segments spans residues 158-178 and 187-207; these read FFATVASFIVQNFFYWGGAFG and NNIMLVYLASLVVWLVSYFLI. Glutamate 215 lines the Zn(2+) pocket.

It belongs to the peptidase M48B family. The cofactor is Zn(2+).

The protein localises to the cell membrane. The chain is Protease HtpX homolog from Moorella thermoacetica (strain ATCC 39073 / JCM 9320).